The sequence spans 247 residues: ATP synthase subunit a, chloroplastic (247 aa).

5 helical membrane-spanning segments follow: residues Gln-38–Val-58, Val-95–Leu-115, Ile-134–Ser-154, Leu-199–Leu-219, and Gly-220–Gly-240.

The protein belongs to the ATPase A chain family. In terms of assembly, F-type ATPases have 2 components, CF(1) - the catalytic core - and CF(0) - the membrane proton channel. CF(1) has five subunits: alpha(3), beta(3), gamma(1), delta(1), epsilon(1). CF(0) has four main subunits: a, b, b' and c.

The protein resides in the plastid. The protein localises to the chloroplast thylakoid membrane. Key component of the proton channel; it plays a direct role in the translocation of protons across the membrane. This is ATP synthase subunit a, chloroplastic from Populus trichocarpa (Western balsam poplar).